We begin with the raw amino-acid sequence, 395 residues long: Phosphoglycerate kinase (395 aa).

Residues Asp-21–Asn-23, Arg-36, His-59–Arg-62, Arg-120, and Arg-153 each bind substrate. ATP contacts are provided by residues Lys-203, Glu-325, and Gly-351 to Ser-354.

Belongs to the phosphoglycerate kinase family. As to quaternary structure, monomer.

The protein localises to the cytoplasm. It catalyses the reaction (2R)-3-phosphoglycerate + ATP = (2R)-3-phospho-glyceroyl phosphate + ADP. Its pathway is carbohydrate degradation; glycolysis; pyruvate from D-glyceraldehyde 3-phosphate: step 2/5. This is Phosphoglycerate kinase from Roseiflexus castenholzii (strain DSM 13941 / HLO8).